The chain runs to 469 residues: MAQTLYDKLWNSHVVHTEEDGTALLYIDRQLLHEVTSPQAFEGLKLAQRPVWRISANLAVSDHNVPTTDRSHGIADPVSKLQVDTLDANCDAYGITQFKMNDVRQGIVHIIGPEQGATLPGMTIVCGDSHTSTHGAFGALAHGIGTSEVEHVLATQTLLQKKSKNMLVKVEGQLPRGCTAKDIVLAIIGQIGTAGGTGYAIEFGGSTIRALTMEGRMTVCNMAIEAGARAGMVAVDDTTVEYLKGRPFVPTGAEWDQAVEYWKTFRSDEGAQFDRVVELDAAQIVPQVTWGTSPEMVTSIDGRVPDPEREKDPVKRDAMERALAYMALAPNTPIEAIKVDKIFIGSCTNARIEDIRAAAYVVKKLNRRVAPNVRLAMVVPGSGLVKAQAEREGLDKVFTEAGFEWREPGCSMCLAMNADRLEPGERCASTSNRNFEGRQGQGGRTHLVSPAMAAAAAIEGHFVDIRRLG.

[4Fe-4S] cluster is bound by residues Cys-347, Cys-410, and Cys-413.

It belongs to the aconitase/IPM isomerase family. LeuC type 1 subfamily. As to quaternary structure, heterodimer of LeuC and LeuD. The cofactor is [4Fe-4S] cluster.

The enzyme catalyses (2R,3S)-3-isopropylmalate = (2S)-2-isopropylmalate. It functions in the pathway amino-acid biosynthesis; L-leucine biosynthesis; L-leucine from 3-methyl-2-oxobutanoate: step 2/4. Its function is as follows. Catalyzes the isomerization between 2-isopropylmalate and 3-isopropylmalate, via the formation of 2-isopropylmaleate. The sequence is that of 3-isopropylmalate dehydratase large subunit from Burkholderia mallei (strain NCTC 10247).